The sequence spans 134 residues: uncharacterized protein (134 aa).

The first 16 residues, 1-16 (MAKAVALLLAAIAASA), serve as a signal peptide directing secretion.

This is an uncharacterized protein from Oryza sativa subsp. indica (Rice).